We begin with the raw amino-acid sequence, 478 residues long: Glutamyl-tRNA(Gln) amidotransferase subunit A (478 aa).

Residues Lys68 and Ser143 each act as charge relay system in the active site. The Acyl-ester intermediate role is filled by Ser167.

This sequence belongs to the amidase family. GatA subfamily. As to quaternary structure, heterotrimer of A, B and C subunits.

It catalyses the reaction L-glutamyl-tRNA(Gln) + L-glutamine + ATP + H2O = L-glutaminyl-tRNA(Gln) + L-glutamate + ADP + phosphate + H(+). Its function is as follows. Allows the formation of correctly charged Gln-tRNA(Gln) through the transamidation of misacylated Glu-tRNA(Gln) in organisms which lack glutaminyl-tRNA synthetase. The reaction takes place in the presence of glutamine and ATP through an activated gamma-phospho-Glu-tRNA(Gln). The chain is Glutamyl-tRNA(Gln) amidotransferase subunit A (gatA) from Mycoplasma pneumoniae (strain ATCC 29342 / M129 / Subtype 1) (Mycoplasmoides pneumoniae).